We begin with the raw amino-acid sequence, 363 residues long: NADH-quinone oxidoreductase subunit H (363 aa).

9 consecutive transmembrane segments (helical) span residues 62 to 82, 96 to 116, 127 to 147, 163 to 183, 202 to 222, 238 to 257, 264 to 286, 299 to 319, and 339 to 359; these read GPMY…KLLF, FVIA…VVPF, VGLL…ILAG, AAQV…VMIA, FFDW…VSGV, EIVA…LFFL, ILVS…QGWV, KGGW…YIWF, and FIPL…YGVI.

This sequence belongs to the complex I subunit 1 family. As to quaternary structure, NDH-1 is composed of 14 different subunits. Subunits NuoA, H, J, K, L, M, N constitute the membrane sector of the complex.

The protein localises to the cell inner membrane. The catalysed reaction is a quinone + NADH + 5 H(+)(in) = a quinol + NAD(+) + 4 H(+)(out). In terms of biological role, NDH-1 shuttles electrons from NADH, via FMN and iron-sulfur (Fe-S) centers, to quinones in the respiratory chain. The immediate electron acceptor for the enzyme in this species is believed to be ubiquinone. Couples the redox reaction to proton translocation (for every two electrons transferred, four hydrogen ions are translocated across the cytoplasmic membrane), and thus conserves the redox energy in a proton gradient. This subunit may bind ubiquinone. This is NADH-quinone oxidoreductase subunit H from Xanthomonas axonopodis pv. citri (strain 306).